Reading from the N-terminus, the 225-residue chain is Ribonuclease HII (225 aa).

In terms of domain architecture, RNase H type-2 spans 35 to 225 (GLVAGVDEVG…SFRPCQISLD (191 aa)). Residues D41, E42, and D137 each contribute to the a divalent metal cation site.

Belongs to the RNase HII family. Mn(2+) is required as a cofactor. The cofactor is Mg(2+).

The protein resides in the cytoplasm. The catalysed reaction is Endonucleolytic cleavage to 5'-phosphomonoester.. Endonuclease that specifically degrades the RNA of RNA-DNA hybrids. The polypeptide is Ribonuclease HII (Trichormus variabilis (strain ATCC 29413 / PCC 7937) (Anabaena variabilis)).